The primary structure comprises 471 residues: Putative multidrug resistance protein MdtD (471 aa).

The Periplasmic portion of the chain corresponds to Met1 to Gln11. Residues Leu12–Ala32 form a helical membrane-spanning segment. Residues Leu33–His48 are Cytoplasmic-facing. A helical transmembrane segment spans residues Met49–Ala69. The Periplasmic segment spans residues Asp70–Asn76. Residues Ile77–Thr97 form a helical membrane-spanning segment. Over Leu98–Leu101 the chain is Cytoplasmic. A helical membrane pass occupies residues Leu102–Met124. The Periplasmic segment spans residues Lys125–Thr137. The helical transmembrane segment at Phe138 to Val158 threads the bilayer. The Cytoplasmic segment spans residues Glu159–His164. A helical transmembrane segment spans residues Trp165–Met185. At Pro186–Asp196 the chain is on the periplasmic side. Residues Leu197–Ser217 form a helical membrane-spanning segment. Residues Lys218–Pro224 are Cytoplasmic-facing. The helical transmembrane segment at Leu225–Ala245 threads the bilayer. The Periplasmic portion of the chain corresponds to Gln246–Asn262. A helical transmembrane segment spans residues Phe263–Met283. Residues Thr284–Pro285 lie on the Cytoplasmic side of the membrane. Residues Val286 to Met306 form a helical membrane-spanning segment. At Val307–Thr341 the chain is on the periplasmic side. Residues Leu342–Leu362 form a helical membrane-spanning segment. The Cytoplasmic portion of the chain corresponds to Gln363–Ser395. The helical transmembrane segment at Met396 to Phe416 threads the bilayer. The Periplasmic segment spans residues Gly417 to Thr430. Residues Val431 to Ala451 form a helical membrane-spanning segment. The Cytoplasmic segment spans residues Arg452–Gln471.

Belongs to the major facilitator superfamily. TCR/Tet family.

The protein localises to the cell inner membrane. This Escherichia coli O1:K1 / APEC protein is Putative multidrug resistance protein MdtD.